We begin with the raw amino-acid sequence, 95 residues long: NADH-quinone oxidoreductase subunit 11 (95 aa).

The next 3 membrane-spanning stretches (helical) occupy residues 1–21, 25–45, and 59–79; these read MSYLLTSALLFALGVYGVLTR, ILVFLSIELMLNAANLSLVGF, and MVIAVAAAEVAVGLGLIVAIF.

Belongs to the complex I subunit 4L family. NDH-1 is composed of 15 different subunits, Nqo1 to Nqo15. The complex has a L-shaped structure, with the hydrophobic arm (subunits Nqo7, Nqo8 and Nqo10 to Nqo14) embedded in the membrane and the hydrophilic peripheral arm (subunits Nqo1 to Nqo6, Nqo9 and Nqo15) protruding into the bacterial cytoplasm. The hydrophilic domain contains all the redox centers.

It localises to the cell inner membrane. The enzyme catalyses a quinone + NADH + 5 H(+)(in) = a quinol + NAD(+) + 4 H(+)(out). In terms of biological role, NDH-1 shuttles electrons from NADH, via FMN and iron-sulfur (Fe-S) centers, to quinones in the respiratory chain. The immediate electron acceptor for the enzyme in this species is menaquinone. Couples the redox reaction to proton translocation (for every two electrons transferred, four hydrogen ions are translocated across the cytoplasmic membrane), and thus conserves the redox energy in a proton gradient required for the synthesis of ATP. The protein is NADH-quinone oxidoreductase subunit 11 (nqo11) of Thermus thermophilus (strain ATCC 27634 / DSM 579 / HB8).